Consider the following 145-residue polypeptide: UPF0201 protein M164_1168 (145 aa).

This sequence belongs to the UPF0201 family.

The sequence is that of UPF0201 protein M164_1168 from Saccharolobus islandicus (strain M.16.4 / Kamchatka #3) (Sulfolobus islandicus).